The primary structure comprises 183 residues: Endoribonuclease AbiQ (183 aa).

It belongs to the ToxN/AbiQ toxin family. Forms a triangular heterohexamer with a single 35-nt-long repeat of RNA antitoxin AntiQ.

The protein localises to the cytoplasm. Its function is as follows. Toxic component of a type III toxin-antitoxin (TA) system. An endoribonuclease that is probably sequence-specific. It is neutralized by its cognate antitoxin RNA AntiQ, which has 2.8 35 nucleotide-long repeats. Cannot be cloned in L.lactis subsp. cremoris strain NZ9000 in the absence of the antitoxin gene; expression in strain NZ9000 even in the presence of antiQ inhibits growth in a bacteriostatic fashion. Confers resistance to 936 and c2 phages but not P335 phages in L.lactis, causes an abortive infection (Abi phenotype). Viral DNA is replicated but not cleaved from its concatemeric form, while the viral major structural protein is produced normally in the presence of this protein. Operon expression in E.coli confers resistance to 3 phages of the Myoviridae family (T4, RB69 and phage 2) and 1 of the Siphoviridae family (T5), but not other tested phages (T1, T3, lambda vir, HK97, Mu and pilH alpha). The presence of this operon in L.lactis subsp. lactis strain IL1403 during phage P008 infection alters the viral transcription profiles. This Lactococcus lactis subsp. lactis (Streptococcus lactis) protein is Endoribonuclease AbiQ.